We begin with the raw amino-acid sequence, 580 residues long: Sensor histidine kinase YvrG (580 aa).

The Cytoplasmic segment spans residues 1 to 6; the sequence is MRLRWK. The helical transmembrane segment at 7–27 threads the bilayer; the sequence is FLFHFFGQMLIVILLLTVMLV. Residues 28–261 lie on the Extracellular side of the membrane; it reads ASFFYLDARF…KSFLKVVLKA (234 aa). The chain crosses the membrane as a helical span at residues 262 to 282; that stretch reads MFLVMAVLFMYIIWMTVWYMF. Topologically, residues 283 to 580 are cytoplasmic; sequence RFGLPIFHTI…TVITILFKKQ (298 aa). The Histidine kinase domain occupies 363–580; that stretch reads GLSHDLKTPL…TVITILFKKQ (218 aa). His-366 is subject to Phosphohistidine; by autocatalysis.

The protein resides in the cell membrane. It carries out the reaction ATP + protein L-histidine = ADP + protein N-phospho-L-histidine.. Member of the two-component regulatory system YvrG/YvrH that positively regulates 7 transcriptional units (wprA, wapA-yxxG, dltABCDE, sunA, sunT-bdbA-yolJ-bdbB, sigO-rsoA, and sigX-rsiX), and negatively regulates the lytABC operon. Probably activates YvrH by phosphorylation. In Bacillus subtilis (strain 168), this protein is Sensor histidine kinase YvrG (yvrG).